A 278-amino-acid chain; its full sequence is Deoxyuridine 5'-triphosphate nucleotidohydrolase (278 aa).

Substrate is bound by residues 171-173 (RSG) and 273-274 (FG).

The protein belongs to the dUTPase family. Mg(2+) serves as cofactor.

It carries out the reaction dUTP + H2O = dUMP + diphosphate + H(+). Involved in nucleotide metabolism: produces dUMP, the immediate precursor of thymidine nucleotides and decreases the intracellular concentration of dUTP to avoid uracil incorporation into viral DNA. This Homo sapiens (Human) protein is Deoxyuridine 5'-triphosphate nucleotidohydrolase.